The following is a 342-amino-acid chain: Isopentenyl-diphosphate delta-isomerase (342 aa).

11-12 (RK) contributes to the substrate binding site. FMN is bound by residues Ser-68, 69 to 71 (SMT), Ser-99, and Asn-127. 99 to 101 (SMR) is a binding site for substrate. Gln-162 provides a ligand contact to substrate. Position 163 (Glu-163) interacts with Mg(2+). Residues Lys-194, Thr-224, 274–276 (GLK), and 295–296 (AG) contribute to the FMN site.

Belongs to the IPP isomerase type 2 family. As to quaternary structure, homooctamer. Dimer of tetramers. FMN is required as a cofactor. NADPH serves as cofactor. It depends on Mg(2+) as a cofactor.

It is found in the cytoplasm. The catalysed reaction is isopentenyl diphosphate = dimethylallyl diphosphate. Functionally, involved in the biosynthesis of isoprenoids. Catalyzes the 1,3-allylic rearrangement of the homoallylic substrate isopentenyl (IPP) to its allylic isomer, dimethylallyl diphosphate (DMAPP). The polypeptide is Isopentenyl-diphosphate delta-isomerase (Rickettsia africae (strain ESF-5)).